A 785-amino-acid polypeptide reads, in one-letter code: Protein kintoun (785 aa).

2 stretches are compositionally biased toward basic and acidic residues: residues 622 to 638 (EHNE…RDTS) and 662 to 679 (HNIE…KEPK). 2 disordered regions span residues 622–698 (EHNE…DSHL) and 719–749 (KSSV…ASSN). The span at 681-695 (TSCTAESTSGQQPND) shows a compositional bias: polar residues. Residues 728–737 (SDLDEDDMPD) are compositionally biased toward acidic residues.

It belongs to the PIH1 family. Kintoun subfamily.

Its subcellular location is the cytoplasm. The protein localises to the dynein axonemal particle. Its function is as follows. Required for cytoplasmic pre-assembly of axonemal dyneins, thereby playing a central role in motility in cilia and flagella. Involved in pre-assembly of dynein arm complexes in the cytoplasm before intraflagellar transport loads them for the ciliary compartment. This is Protein kintoun from Xenopus tropicalis (Western clawed frog).